We begin with the raw amino-acid sequence, 117 residues long: Protein Wnt-6 (117 aa).

Residue Ser1 is the site of O-palmitoleoyl serine; by PORCN attachment. Cys83 and Cys98 are joined by a disulfide. N-linked (GlcNAc...) asparagine glycosylation occurs at Asn84.

Belongs to the Wnt family. In terms of processing, palmitoleoylation is required for efficient binding to frizzled receptors. Depalmitoleoylation leads to Wnt signaling pathway inhibition.

The protein localises to the secreted. It localises to the extracellular space. It is found in the extracellular matrix. Ligand for members of the frizzled family of seven transmembrane receptors. Probable developmental protein. May be a signaling molecule which affects the development of discrete regions of tissues. Is likely to signal over only few cell diameters. The polypeptide is Protein Wnt-6 (wnt6) (Thunnus thynnus (Atlantic bluefin tuna)).